Reading from the N-terminus, the 428-residue chain is Dihydroorotase (428 aa).

Zn(2+) contacts are provided by His60 and His62. Residues 62–64 (HLR) and Asn94 contribute to the substrate site. Zn(2+)-binding residues include Asp152, His179, and His232. Asn278 is a binding site for substrate. Asp305 is a binding site for Zn(2+). Residue Asp305 is part of the active site. Substrate contacts are provided by residues His309 and 323 to 324 (FG).

This sequence belongs to the metallo-dependent hydrolases superfamily. DHOase family. Class I DHOase subfamily. It depends on Zn(2+) as a cofactor.

It carries out the reaction (S)-dihydroorotate + H2O = N-carbamoyl-L-aspartate + H(+). It functions in the pathway pyrimidine metabolism; UMP biosynthesis via de novo pathway; (S)-dihydroorotate from bicarbonate: step 3/3. Functionally, catalyzes the reversible cyclization of carbamoyl aspartate to dihydroorotate. This chain is Dihydroorotase, found in Anoxybacillus flavithermus (strain DSM 21510 / WK1).